A 319-amino-acid chain; its full sequence is Ribosomal RNA small subunit methyltransferase H (319 aa).

S-adenosyl-L-methionine-binding positions include 37-39 (GGH), Asp-56, Leu-90, Asp-104, and Gln-111.

The protein belongs to the methyltransferase superfamily. RsmH family.

The protein localises to the cytoplasm. It carries out the reaction cytidine(1402) in 16S rRNA + S-adenosyl-L-methionine = N(4)-methylcytidine(1402) in 16S rRNA + S-adenosyl-L-homocysteine + H(+). Functionally, specifically methylates the N4 position of cytidine in position 1402 (C1402) of 16S rRNA. The protein is Ribosomal RNA small subunit methyltransferase H of Nocardioides sp. (strain ATCC BAA-499 / JS614).